A 551-amino-acid chain; its full sequence is Eukaryotic translation initiation factor 3 subunit D-2 (551 aa).

The segment at 108 to 152 (RARGRTGRGNATLGGLGGPVAGGSTANSTKYGKGRNTRNAQNMGR) is disordered. Residues 119–128 (TLGGLGGPVA) are compositionally biased toward gly residues. Residues 290 to 304 (QFDLLTVNETSLEPP) form an RNA gate region. A disordered region spans residues 530-551 (AFDSDGDDESESSEPFGNSIDN). A compositionally biased stretch (acidic residues) spans 531-541 (FDSDGDDESES).

This sequence belongs to the eIF-3 subunit D family. In terms of assembly, component of the eukaryotic translation initiation factor 3 (eIF-3) complex. The eIF-3 complex interacts with pix.

Its subcellular location is the cytoplasm. Its function is as follows. mRNA cap-binding component of the eukaryotic translation initiation factor 3 (eIF-3) complex, which is involved in protein synthesis of a specialized repertoire of mRNAs and, together with other initiation factors, stimulates binding of mRNA and methionyl-tRNAi to the 40S ribosome. The eIF-3 complex specifically targets and initiates translation of a subset of mRNAs involved in cell proliferation. In the eIF-3 complex, eif3d specifically recognizes and binds the 7-methylguanosine cap of a subset of mRNAs. In Drosophila yakuba (Fruit fly), this protein is Eukaryotic translation initiation factor 3 subunit D-2.